A 488-amino-acid polypeptide reads, in one-letter code: Germacrene A hydroxylase (488 aa).

The chain crosses the membrane as a helical; Signal-anchor for type II membrane protein span at residues 7-23 (TSIALATILFFVYKFAT). 4 N-linked (GlcNAc...) asparagine glycosylation sites follow: Asn-169, Asn-260, Asn-379, and Asn-410. Cys-432 contacts heme.

This sequence belongs to the cytochrome P450 family. Expressed in floral glandular trichomes.

Its subcellular location is the endoplasmic reticulum membrane. The enzyme catalyses (+)-(R)-germacrene A + 3 reduced [NADPH--hemoprotein reductase] + 3 O2 = germacra-1(10),4,11(13)-trien-12-oate + 3 oxidized [NADPH--hemoprotein reductase] + 4 H2O + 4 H(+). Its pathway is secondary metabolite biosynthesis; terpenoid biosynthesis. Functionally, involved in the biosynthesis of germacrene-derived sesquiterpene lactones. Component of the parthenolide biosynthetic pathway; parthenolide and conjugates are promising anti-cancer drugs highly active against colon cancer cells. Catalyzes three consecutive oxidations of germacrene A to produce germacrene A acid. This is Germacrene A hydroxylase from Tanacetum parthenium (Feverfew).